Consider the following 342-residue polypeptide: Global transcription regulator FGP1 (342 aa).

The disordered stretch occupies residues 91 to 113 (FSPGEKKRASKKPKKQAGVAKAY).

The protein belongs to the MIT1/WOR1 family.

The protein localises to the nucleus. Its function is as follows. Global transcriptional regulator of pathogenicity. Regulates many genes during growth in putrescine medium and during infection. Involved in the developmental processes of conidium formation and sexual reproduction and modulates a morphological change that accompanies mycotoxin production. This is Global transcription regulator FGP1 from Gibberella zeae (strain ATCC MYA-4620 / CBS 123657 / FGSC 9075 / NRRL 31084 / PH-1) (Wheat head blight fungus).